Reading from the N-terminus, the 259-residue chain is Global transcriptional regulator CodY (259 aa).

The interval 1–155 is GAF domain; that stretch reads MDLLTRTRKI…GATVVGMEIL (155 aa). A DNA-binding region (H-T-H motif) is located at residues 203–222; that stretch reads ASKIADRVGITRSVIVNALR. A Phosphoserine modification is found at serine 215.

Belongs to the CodY family.

Its subcellular location is the cytoplasm. Functionally, DNA-binding global transcriptional regulator which is involved in the adaptive response to starvation and acts by directly or indirectly controlling the expression of numerous genes in response to nutrient availability. During rapid exponential growth, CodY is highly active and represses genes whose products allow adaptation to nutrient depletion. This Shouchella clausii (strain KSM-K16) (Alkalihalobacillus clausii) protein is Global transcriptional regulator CodY.